The sequence spans 257 residues: GTP cyclohydrolase 1 type 2 homolog (257 aa).

His65, Asp103, His221, and Glu224 together coordinate a divalent metal cation.

This sequence belongs to the GTP cyclohydrolase I type 2/NIF3 family. Homohexamer.

This is GTP cyclohydrolase 1 type 2 homolog (ykiD) from Lactococcus lactis subsp. lactis (strain IL1403) (Streptococcus lactis).